The sequence spans 122 residues: uncharacterized protein (122 aa).

This is an uncharacterized protein from Methanothermobacter thermautotrophicus (Methanobacterium thermoformicicum).